The following is a 299-amino-acid chain: tRNA-cytidine(32) 2-sulfurtransferase (299 aa).

The PP-loop motif signature appears at 49–54 (SGGKDS). [4Fe-4S] cluster is bound by residues cysteine 124, cysteine 127, and cysteine 215.

The protein belongs to the TtcA family. In terms of assembly, homodimer. Requires Mg(2+) as cofactor. [4Fe-4S] cluster serves as cofactor.

It is found in the cytoplasm. It catalyses the reaction cytidine(32) in tRNA + S-sulfanyl-L-cysteinyl-[cysteine desulfurase] + AH2 + ATP = 2-thiocytidine(32) in tRNA + L-cysteinyl-[cysteine desulfurase] + A + AMP + diphosphate + H(+). Its pathway is tRNA modification. In terms of biological role, catalyzes the ATP-dependent 2-thiolation of cytidine in position 32 of tRNA, to form 2-thiocytidine (s(2)C32). The sulfur atoms are provided by the cysteine/cysteine desulfurase (IscS) system. The chain is tRNA-cytidine(32) 2-sulfurtransferase from Deinococcus radiodurans (strain ATCC 13939 / DSM 20539 / JCM 16871 / CCUG 27074 / LMG 4051 / NBRC 15346 / NCIMB 9279 / VKM B-1422 / R1).